The chain runs to 217 residues: Probable transaldolase (217 aa).

The active-site Schiff-base intermediate with substrate is Lys83.

Belongs to the transaldolase family. Type 3B subfamily.

Its subcellular location is the cytoplasm. It catalyses the reaction D-sedoheptulose 7-phosphate + D-glyceraldehyde 3-phosphate = D-erythrose 4-phosphate + beta-D-fructose 6-phosphate. It functions in the pathway carbohydrate degradation; pentose phosphate pathway; D-glyceraldehyde 3-phosphate and beta-D-fructose 6-phosphate from D-ribose 5-phosphate and D-xylulose 5-phosphate (non-oxidative stage): step 2/3. In terms of biological role, transaldolase is important for the balance of metabolites in the pentose-phosphate pathway. This Ruegeria sp. (strain TM1040) (Silicibacter sp.) protein is Probable transaldolase.